The primary structure comprises 358 residues: 3-dehydroquinate synthase (358 aa).

NAD(+) contacts are provided by residues 105-109, 129-130, lysine 142, lysine 151, and 169-172; these read GVVGD, TT, and TLKT. Zn(2+) is bound by residues glutamate 184, histidine 245, and histidine 262.

Belongs to the sugar phosphate cyclases superfamily. Dehydroquinate synthase family. It depends on NAD(+) as a cofactor. Requires Co(2+) as cofactor. Zn(2+) is required as a cofactor.

It is found in the cytoplasm. The enzyme catalyses 7-phospho-2-dehydro-3-deoxy-D-arabino-heptonate = 3-dehydroquinate + phosphate. The protein operates within metabolic intermediate biosynthesis; chorismate biosynthesis; chorismate from D-erythrose 4-phosphate and phosphoenolpyruvate: step 2/7. Functionally, catalyzes the conversion of 3-deoxy-D-arabino-heptulosonate 7-phosphate (DAHP) to dehydroquinate (DHQ). The protein is 3-dehydroquinate synthase of Enterococcus faecalis (strain ATCC 700802 / V583).